The primary structure comprises 370 residues: ABSCISIC ACID-INSENSITIVE 5-like protein 8 (370 aa).

Phosphoserine occurs at positions 25, 44, and 69. Residues 56–77 (SAEETQEGSQRQGSTTLPPTLS) form a disordered region. Over residues 62–77 (EGSQRQGSTTLPPTLS) the composition is skewed to polar residues. Threonine 111 is modified (phosphothreonine). The span at 260 to 278 (ESSLLSPSPYISNGSTSTR) shows a compositional bias: polar residues. The interval 260–281 (ESSLLSPSPYISNGSTSTRGGK) is disordered. The 64-residue stretch at 293–356 (VDKKLRRKIK…MEPGMISLHE (64 aa)) folds into the bZIP domain. A basic motif region spans residues 295-314 (KKLRRKIKNRESAARSRARK). The segment at 328-342 (LKKDYEELLKQHVEL) is leucine-zipper. The disordered stretch occupies residues 349-370 (PGMISLHERPERKLRRTKSDIK). Positions 354–370 (LHERPERKLRRTKSDIK) are enriched in basic and acidic residues.

This sequence belongs to the bZIP family. ABI5 subfamily. In terms of assembly, DNA-binding heterodimer.

Its subcellular location is the nucleus. Functionally, could participate in abscisic acid-regulated gene expression. In Arabidopsis thaliana (Mouse-ear cress), this protein is ABSCISIC ACID-INSENSITIVE 5-like protein 8 (BZIP15).